The sequence spans 396 residues: Pyruvate dehydrogenase E1 component subunit alpha type I, mitochondrial (396 aa).

A mitochondrion-targeting transit peptide spans 1 to 25; the sequence is MIFVFANIFKVPTVSPSVMAISVRL. Residues histidine 88, tyrosine 114, arginine 115, glycine 153, glycine 161, valine 163, aspartate 192, glycine 193, alanine 194, asparagine 221, and tyrosine 223 each coordinate pyruvate. Thiamine diphosphate is bound by residues tyrosine 114 and arginine 115. The thiamine diphosphate site is built by glycine 161, valine 163, aspartate 192, glycine 193, alanine 194, and asparagine 221. A Mg(2+)-binding site is contributed by aspartate 192. Mg(2+) contacts are provided by asparagine 221 and tyrosine 223. Residue histidine 288 coordinates thiamine diphosphate. Serine 289 and serine 296 each carry phosphoserine.

Heterotetramer of two PDHA1 and two PDHB subunits. The heterotetramer interacts with DLAT, and is part of the multimeric pyruvate dehydrogenase complex that contains multiple copies of pyruvate dehydrogenase (E1), dihydrolipoamide acetyltransferase (DLAT, E2) and lipoamide dehydrogenase (DLD, E3). It depends on thiamine diphosphate as a cofactor. Mg(2+) is required as a cofactor.

The protein localises to the mitochondrion matrix. The catalysed reaction is N(6)-[(R)-lipoyl]-L-lysyl-[protein] + pyruvate + H(+) = N(6)-[(R)-S(8)-acetyldihydrolipoyl]-L-lysyl-[protein] + CO2. Pyruvate dehydrogenase activity is inhibited by phosphorylation of PDHA1; it is reactivated by dephosphorylation. Its function is as follows. The pyruvate dehydrogenase complex catalyzes the overall conversion of pyruvate to acetyl-CoA and CO(2), and thereby links the glycolytic pathway to the tricarboxylic cycle. The sequence is that of Pyruvate dehydrogenase E1 component subunit alpha type I, mitochondrial from Ascaris suum (Pig roundworm).